The following is a 194-amino-acid chain: Imidazoleglycerol-phosphate dehydratase (194 aa).

This sequence belongs to the imidazoleglycerol-phosphate dehydratase family.

It is found in the cytoplasm. The enzyme catalyses D-erythro-1-(imidazol-4-yl)glycerol 3-phosphate = 3-(imidazol-4-yl)-2-oxopropyl phosphate + H2O. The protein operates within amino-acid biosynthesis; L-histidine biosynthesis; L-histidine from 5-phospho-alpha-D-ribose 1-diphosphate: step 6/9. The sequence is that of Imidazoleglycerol-phosphate dehydratase from Thermus thermophilus (strain ATCC 27634 / DSM 579 / HB8).